Reading from the N-terminus, the 277-residue chain is Release factor glutamine methyltransferase (277 aa).

S-adenosyl-L-methionine is bound by residues 120–124 (GTGSG), Asp143, Trp171, and Asn186. 186-189 (NPPY) is a binding site for substrate.

The protein belongs to the protein N5-glutamine methyltransferase family. PrmC subfamily.

It carries out the reaction L-glutaminyl-[peptide chain release factor] + S-adenosyl-L-methionine = N(5)-methyl-L-glutaminyl-[peptide chain release factor] + S-adenosyl-L-homocysteine + H(+). Methylates the class 1 translation termination release factors RF1/PrfA and RF2/PrfB on the glutamine residue of the universally conserved GGQ motif. The sequence is that of Release factor glutamine methyltransferase from Coxiella burnetii (strain RSA 493 / Nine Mile phase I).